A 120-amino-acid polypeptide reads, in one-letter code: Small ribosomal subunit protein eS25 (120 aa).

A disordered region spans residues 1-32; the sequence is MPPKAGQTKKAKMEAANKGAKKTTKKWSKGQS. A compositionally biased stretch (basic residues) spans 19–28; it reads GAKKTTKKWS.

It belongs to the eukaryotic ribosomal protein eS25 family.

This is Small ribosomal subunit protein eS25 (RPS25) from Leishmania infantum.